We begin with the raw amino-acid sequence, 345 residues long: NADPH dehydrogenase (345 aa).

23-26 (SPMC) lines the FMN pocket. Tyr28 provides a ligand contact to substrate. The FMN site is built by Ala60 and Gln102. Substrate is bound at residue 164–167 (HGAH). Residues Arg215 and 307–308 (GR) contribute to the FMN site.

Belongs to the NADH:flavin oxidoreductase/NADH oxidase family. NamA subfamily. As to quaternary structure, homotetramer. The cofactor is FMN.

The enzyme catalyses A + NADPH + H(+) = AH2 + NADP(+). Catalyzes the reduction of the double bond of an array of alpha,beta-unsaturated aldehydes and ketones. It also reduces the nitro group of nitroester and nitroaromatic compounds. It could have a role in detoxification processes. In Bacillus cereus (strain ATCC 14579 / DSM 31 / CCUG 7414 / JCM 2152 / NBRC 15305 / NCIMB 9373 / NCTC 2599 / NRRL B-3711), this protein is NADPH dehydrogenase.